A 207-amino-acid polypeptide reads, in one-letter code: Protein lin-7 homolog B (207 aa).

A Kinase interacting site motif is present at residues 1–13 (MAALVEPLGLERD). Positions 10-65 (LERDVSRAVELLERLQRSGELPPQKLQALQRVLQSRFCSAIREVYEQLYDTLDITG) constitute an L27 domain. Positions 93–175 (VVELPKTDEG…SVKLVVRYTP (83 aa)) constitute a PDZ domain. The tract at residues 187 to 207 (KMRSARRRQQHHSYSSLESRG) is disordered. The span at 198-207 (HSYSSLESRG) shows a compositional bias: polar residues.

This sequence belongs to the lin-7 family. Forms two exclusive ternary complexes with CASK and CASKIN1. The brain-specific heterotrimeric complex (LIN-10-LIN-2-LIN-7 complex) composed of at least APBA1, CASK, and LIN7, associates with the motor protein KIF17 to transport vesicles along microtubules. Forms a heterotrimeric complex composed of MMP5, LIN7B and PATJ; the N-terminal L27 domain of PALS1 interacts with the L27 domain of PATJ and the C-terminal L27 domain of PALS1 interacts with the L27 domain of LIN7B. Forms a heterotrimeric complex with DLG1 and CASK via their L27 domains. Interacts with DLG4 and GRIN2B as well as CDH1 and CTNNB1, the channels KCNJ12/Kir2.2, KCNJ4/Kir2.3 and probably KCNJ2/Kir2.1 and SLC6A12/BGT-1 via its PDZ domain. The association of LIN7A with cadherin and beta-catenin is calcium-dependent, occurs at synaptic junctions and requires the actin cytoskeleton. Interacts with EGFR, ERBB2, ERBB3 and ERBB4 with both PDZ and KID domains. Associates with KIF17 via APBA1. Interacts with ASIC3. Interacts with TOPK. Interacts with RTKN. Interacts with APBA1. Interacts with MPP7. Interacts with DLG2. Interacts with DLG3. Expressed only in brain.

Its subcellular location is the cell membrane. It localises to the basolateral cell membrane. The protein resides in the cell junction. It is found in the postsynaptic density membrane. The protein localises to the tight junction. Plays a role in establishing and maintaining the asymmetric distribution of channels and receptors at the plasma membrane of polarized cells. Forms membrane-associated multiprotein complexes that may regulate delivery and recycling of proteins to the correct membrane domains. The tripartite complex composed of LIN7 (LIN7A, LIN7B or LIN7C), CASK and APBA1 associates with the motor protein KIF17 to transport vesicles containing N-methyl-D-aspartate (NMDA) receptor subunit NR2B along microtubules. This complex may have the potential to couple synaptic vesicle exocytosis to cell adhesion in brain. Ensures the proper localization of GRIN2B (subunit 2B of the NMDA receptor) to neuronal postsynaptic density and may function in localizing synaptic vesicles at synapses where it is recruited by beta-catenin and cadherin. Required to localize Kir2 channels, GABA transporter (SLC6A12) and EGFR/ERBB1, ERBB2, ERBB3 and ERBB4 to the basolateral membrane of epithelial cells. May increase the amplitude of ASIC3 acid-evoked currents by stabilizing the channel at the cell surface. This Rattus norvegicus (Rat) protein is Protein lin-7 homolog B (Lin7b).